Reading from the N-terminus, the 957-residue chain is Glycine dehydrogenase (decarboxylating) (957 aa).

At K708 the chain carries N6-(pyridoxal phosphate)lysine.

The protein belongs to the GcvP family. The glycine cleavage system is composed of four proteins: P, T, L and H. Requires pyridoxal 5'-phosphate as cofactor.

It catalyses the reaction N(6)-[(R)-lipoyl]-L-lysyl-[glycine-cleavage complex H protein] + glycine + H(+) = N(6)-[(R)-S(8)-aminomethyldihydrolipoyl]-L-lysyl-[glycine-cleavage complex H protein] + CO2. Functionally, the glycine cleavage system catalyzes the degradation of glycine. The P protein binds the alpha-amino group of glycine through its pyridoxal phosphate cofactor; CO(2) is released and the remaining methylamine moiety is then transferred to the lipoamide cofactor of the H protein. The sequence is that of Glycine dehydrogenase (decarboxylating) from Enterobacter sp. (strain 638).